A 497-amino-acid chain; its full sequence is Glutathione hydrolase 6 (497 aa).

The disordered stretch occupies residues 1 to 34 (MDATTGPVHYHKLQLWEPGVESEEEEEEEEEEIA). The Cytoplasmic segment spans residues 1–51 (MDATTGPVHYHKLQLWEPGVESEEEEEEEEEEIAEPLVLSLRRLQNTPRNE). The segment covering 20-34 (VESEEEEEEEEEEIA) has biased composition (acidic residues). A helical; Signal-anchor for type II membrane protein membrane pass occupies residues 52 to 72 (VGGLPGAWARLLAGLLLLAVS). The Extracellular portion of the chain corresponds to 73–497 (SSLALRQLHS…PSGCCPFQGY (425 aa)). 4 N-linked (GlcNAc...) asparagine glycosylation sites follow: Asn164, Asn169, Asn367, and Asn378.

The protein belongs to the gamma-glutamyltransferase family. Heterodimer composed of the light and heavy chains. The active site is located in the light chain. Post-translationally, cleaved by autocatalysis into a large and a small subunit and the autocatalytic cleavage is essential to the functional activation of the enzyme.

It localises to the membrane. It carries out the reaction an N-terminal (5-L-glutamyl)-[peptide] + an alpha-amino acid = 5-L-glutamyl amino acid + an N-terminal L-alpha-aminoacyl-[peptide]. The catalysed reaction is glutathione + H2O = L-cysteinylglycine + L-glutamate. The enzyme catalyses an S-substituted glutathione + H2O = an S-substituted L-cysteinylglycine + L-glutamate. The protein operates within sulfur metabolism; glutathione metabolism. Its function is as follows. Hydrolyzes and transfers gamma-glutamyl moieties from glutathione and other gamma-glutamyl compounds to acceptors. The chain is Glutathione hydrolase 6 from Mus musculus (Mouse).